Here is a 427-residue protein sequence, read N- to C-terminus: MEKHGDYDIKKICVIGLGYIGLPTASMLANHGYDVVGVDVNEKRVNQIKNGELKIEEPGLLTLVKGAINSKNLNVRTSATEADAFIICVPTPALAKEDGSKKCDLSYVMSAVEAILPFVKDGNLIVIESTIPPETTKKIYETLNKKIYVAHCPERVLPGKILKELVENDRIIGGINKKSAEMAKEIYKSFVEGQIYTTDSNTAEMVKLMENTYRDINIALANEFAKICDEIGVNVWDAIKIANKHPRVNILNPGPGVGGHCISIDPWFIVEKTNNAKFIRAARELNDNMPAYVCNSVLSELKKLGIEKPKISIFGATYKGNVEDTRESPSKNVIKMLLENGATVSTYDPHASYFEYPLSTLDECISGSDCIVVLTDHDVFKTIKKDDIDEICPKLKNKIVFDTKNILEHSLWKKAGFTVKLLGNGAW.

NAD(+)-binding residues include Tyr19, Ile20, Asp39, Arg44, Thr91, and Thr130. The UDP-N-acetyl-alpha-D-mannosaminouronate site is built by Arg155, Val156, Lys207, Asn211, Arg214, His245, Arg247, and Gly258. The active-site Proton donor/acceptor is the Lys207. Cys261 acts as the Nucleophile in catalysis. Residues Tyr318 and Lys319 each contribute to the UDP-N-acetyl-alpha-D-mannosaminouronate site. Arg326 contributes to the NAD(+) binding site. Residue Lys404 coordinates UDP-N-acetyl-alpha-D-mannosaminouronate.

The protein belongs to the UDP-glucose/GDP-mannose dehydrogenase family. As to quaternary structure, homotetramer; probably dimer of dimers.

The catalysed reaction is UDP-N-acetyl-alpha-D-mannosamine + 2 NAD(+) + H2O = UDP-N-acetyl-alpha-D-mannosaminouronate + 2 NADH + 3 H(+). Its function is as follows. Catalyzes the four-electron oxidation of UDP-N-acetyl-D-mannosamine (UDP-ManNAc), reducing NAD(+) and releasing UDP-N-acetylmannosaminuronic acid (UDP-ManNAcA). Cannot use NADP instead of NAD. The chain is UDP-N-acetyl-D-mannosamine dehydrogenase (wecC) from Methanococcus maripaludis (strain DSM 14266 / JCM 13030 / NBRC 101832 / S2 / LL).